Consider the following 300-residue polypeptide: Protein N-terminal and lysine N-methyltransferase EFM7 (300 aa).

S-adenosyl-L-methionine-binding positions include Trp-75, Gly-101–Gly-103, Asp-123, Trp-156, and Ser-179.

Belongs to the class I-like SAM-binding methyltransferase superfamily. EFM7 family.

The protein localises to the cytoplasm. S-adenosyl-L-methionine-dependent protein methyltransferase that trimethylates the N-terminal glycine 'Gly-2' of elongation factor 1-alpha, before also catalyzing the mono- and dimethylation of 'Lys-3'. The polypeptide is Protein N-terminal and lysine N-methyltransferase EFM7 (Cryptococcus neoformans var. neoformans serotype D (strain JEC21 / ATCC MYA-565) (Filobasidiella neoformans)).